The sequence spans 118 residues: Basic phospholipase A2 nigroxin B (118 aa).

Disulfide bonds link Cys-11–Cys-70, Cys-25–Cys-117, Cys-27–Cys-43, Cys-42–Cys-98, Cys-49–Cys-91, Cys-59–Cys-84, and Cys-77–Cys-89. Residues Tyr-26, Gly-28, and Gly-30 each coordinate Ca(2+). The active site involves His-46. Residue Asp-47 participates in Ca(2+) binding. The active site involves Asp-92.

It belongs to the phospholipase A2 family. Group I subfamily. D49 sub-subfamily. It depends on Ca(2+) as a cofactor. In terms of tissue distribution, expressed by the venom gland.

The protein localises to the secreted. It catalyses the reaction a 1,2-diacyl-sn-glycero-3-phosphocholine + H2O = a 1-acyl-sn-glycero-3-phosphocholine + a fatty acid + H(+). In terms of biological role, snake venom phospholipase A2 (PLA2) that has only a weak enzymatic activity. It has a myotoxic activity in vivo (dystrophic effect). PLA2 catalyzes the calcium-dependent hydrolysis of the 2-acyl groups in 3-sn-phosphoglycerides. The protein is Basic phospholipase A2 nigroxin B of Micrurus nigrocinctus (Central American coral snake).